The chain runs to 177 residues: Peptide methionine sulfoxide reductase MsrA 2 (177 aa).

Cys-12 is a catalytic residue.

Belongs to the MsrA Met sulfoxide reductase family.

The catalysed reaction is L-methionyl-[protein] + [thioredoxin]-disulfide + H2O = L-methionyl-(S)-S-oxide-[protein] + [thioredoxin]-dithiol. It catalyses the reaction [thioredoxin]-disulfide + L-methionine + H2O = L-methionine (S)-S-oxide + [thioredoxin]-dithiol. Functionally, has an important function as a repair enzyme for proteins that have been inactivated by oxidation. Catalyzes the reversible oxidation-reduction of methionine sulfoxide in proteins to methionine. This is Peptide methionine sulfoxide reductase MsrA 2 from Staphylococcus aureus (strain MRSA252).